Here is a 463-residue protein sequence, read N- to C-terminus: MLLLLLPLLWGRERAEGQTSKLLTMQSSVTVQEGLCVHVPCSFSYPSHGWIYPGPVVHGYWFREGANTDQDAPVATNNPARAVWEETRDRFHLLGDPHTKNCTLSIRDARRSDAGRYFFRMEKGSIKWNYKHHRLSVNVTALTHRPNILIPGTLESGCPQNLTCSVPWACEQGTPPMISWIGTSVSPLDPSTTRSSVLTLIPQPQDHGTSLTCQVTFPGASVTTNKTVHLNVSYPPQNLTMTVFQGDGTVSTVLGNGSSLSLPEGQSLRLVCAVDAVDSNPPARLSLSWRGLTLCPSQPSNPGVLELPWVHLRDAAEFTCRAQNPLGSQQVYLNVSLQSKATSGVTQGVVGGAGATALVFLSFCVIFVVVRSCRKKSARPAAGVGDTGIEDANAVRGSASQGPLTEPWAEDSPPDQPPPASARSSVGEGELQYASLSFQMVKPWDSRGQEATDTEYSEIKIHR.

Residues 1 to 17 (MLLLLLPLLWGRERAEG) form the signal peptide. Residues 18 to 348 (QTSKLLTMQS…SKATSGVTQG (331 aa)) lie on the Extracellular side of the membrane. In terms of domain architecture, Ig-like V-type spans 20–140 (SKLLTMQSSV…KHHRLSVNVT (121 aa)). 3 disulfide bridges follow: Cys-36-Cys-170, Cys-41-Cys-102, and Cys-164-Cys-213. An N-linked (GlcNAc...) asparagine glycan is attached at Asn-101. Arg-120 contacts N-acetylneuraminate. 2 N-linked (GlcNAc...) asparagine glycosylation sites follow: Asn-138 and Asn-161. Residues 146–229 (PNILIPGTLE…ASVTTNKTVH (84 aa)) form the Ig-like C2-type 1 domain. Asn-225, Asn-231, Asn-238, and Asn-256 each carry an N-linked (GlcNAc...) asparagine glycan. The region spanning 236-336 (PQNLTMTVFQ…GSQQVYLNVS (101 aa)) is the Ig-like C2-type 2 domain. The cysteines at positions 272 and 320 are disulfide-linked. Residue Asn-334 is glycosylated (N-linked (GlcNAc...) asparagine). A helical transmembrane segment spans residues 349–369 (VVGGAGATALVFLSFCVIFVV). Residues 370-463 (VRSCRKKSAR…TEYSEIKIHR (94 aa)) lie on the Cytoplasmic side of the membrane. The disordered stretch occupies residues 380-428 (PAAGVGDTGIEDANAVRGSASQGPLTEPWAEDSPPDQPPPASARSSVGE). An ITIM motif motif is present at residues 431–436 (LQYASL). Residues 444-463 (WDSRGQEATDTEYSEIKIHR) are disordered. An SLAM-like motif motif is present at residues 454–459 (TEYSEI).

Belongs to the immunoglobulin superfamily. SIGLEC (sialic acid binding Ig-like lectin) family. In terms of tissue distribution, expressed by peripheral blood leukocytes (neutrophils and monocytes but not eosinophils). Found in liver, fetal liver, bone marrow, placenta, spleen and in lower levels in skeletal muscle, fetal brain, stomach, lung, thymus, prostate, brain, mammary, adrenal gland, colon, trachea, cerebellum, testis, small intestine and spinal cordon.

The protein resides in the membrane. Functionally, putative adhesion molecule that mediates sialic-acid dependent binding to cells. Preferentially binds to alpha-2,3- or alpha-2,6-linked sialic acid. The sialic acid recognition site may be masked by cis interactions with sialic acids on the same cell surface. This is Sialic acid-binding Ig-like lectin 9 (SIGLEC9) from Homo sapiens (Human).